A 520-amino-acid chain; its full sequence is Glutamate--cysteine ligase (520 aa).

This sequence belongs to the glutamate--cysteine ligase type 1 family. Type 1 subfamily.

It catalyses the reaction L-cysteine + L-glutamate + ATP = gamma-L-glutamyl-L-cysteine + ADP + phosphate + H(+). Its pathway is sulfur metabolism; glutathione biosynthesis; glutathione from L-cysteine and L-glutamate: step 1/2. The sequence is that of Glutamate--cysteine ligase from Sodalis glossinidius (strain morsitans).